We begin with the raw amino-acid sequence, 577 residues long: Arginine--tRNA ligase (577 aa).

The 'HIGH' region signature appears at 122 to 132 (PNVAKEMHVGH).

It belongs to the class-I aminoacyl-tRNA synthetase family. As to quaternary structure, monomer.

The protein resides in the cytoplasm. It catalyses the reaction tRNA(Arg) + L-arginine + ATP = L-arginyl-tRNA(Arg) + AMP + diphosphate. This Vibrio vulnificus (strain YJ016) protein is Arginine--tRNA ligase.